Here is a 723-residue protein sequence, read N- to C-terminus: ADP-ribosylation factor-binding protein GGA3 (723 aa).

Residues 1-313 (MAEAEGESLE…GEVATLTLPD (313 aa)) are binds to ARF1 (in long isoform). Positions 16-146 (ATNPSNRQED…MLKRQGIVQS (131 aa)) constitute a VHS domain. Residues Ser159 and Ser275 each carry the phosphoserine modification. In terms of domain architecture, GAT spans 171–298 (DEEKSKLLAK…VINSYKTIIE (128 aa)). The tract at residues 299–593 (GQVINGEVAT…IHVPLESIKP (295 aa)) is unstructured hinge. The segment at 339–384 (SSVLAPAPTPPSSGIPILPPPPQASGPPRSRSSSQAEATLGPSSTS) is disordered. Pro residues predominate over residues 345–363 (APTPPSSGIPILPPPPQAS). A compositionally biased stretch (low complexity) spans 364-374 (GPPRSRSSSQA). Positions 391–395 (DEELL) match the DXXLL motif. Positions 428–464 (DFFSPRPGTAACGASDAPLLQPSAPSSSSSQAPLPPP) are disordered. Positions 441–459 (ASDAPLLQPSAPSSSSSQA) are enriched in low complexity. The GAE domain occupies 594 to 715 (SSALPVTAYD…TEVGEVDQFP (122 aa)).

Belongs to the GGA protein family. Monomer. Interacts with GGA1 and GGA2. Binds to clathrin and activated ARFs, such as ARF1, ARF5 and ARF6. Binds RABEP1 and RABGEF1. Interacts with the membrane proteins M6PR/CD-MPR and IGF2R/CI-MPR and the accessory proteins SYNRG, EPN4, NECAP1, NECAP2 and AFTPH/aftiphilin. Interacts with TSG101 and UBC. Interacts with ADRA2B. Interacts with NTRK1; the interaction is independent of NTRK1 activation and ubiquitination. Interacts (via VHS domain) with BACE1 (via DXXLL motif). In terms of processing, phosphorylated by CK2 and dephosphorylated by PP2A. Phosphorylation of GGA3 allows the internal DXXLL motif to bind the VHS domain and to inhibit the recognition of cargo signals. Post-translationally, ubiquitinated. Proteolytically cleaved during apoptosis by CASP3. Ubiquitously expressed.

The protein resides in the golgi apparatus. Its subcellular location is the trans-Golgi network membrane. It localises to the endosome membrane. The protein localises to the early endosome membrane. It is found in the recycling endosome membrane. Its function is as follows. Plays a role in protein sorting and trafficking between the trans-Golgi network (TGN) and endosomes. Mediates the ARF-dependent recruitment of clathrin to the TGN and binds ubiquitinated proteins and membrane cargo molecules with a cytosolic acidic cluster-dileucine (DXXLL) motif. Mediates export of the GPCR receptor ADRA2B to the cell surface. nvolved in BACE1 transport and sorting as well as regulation of BACE1 protein levels. Regulates retrograde transport of BACE1 from endosomes to the trans-Golgi network via interaction through the VHS motif and dependent of BACE1 phosphorylation. Modulates BACE1 protein levels independently of the interaction between VHS domain and DXXLL motif through recognition of ubiquitination. Key player in a novel DXXLL-mediated endosomal sorting machinery to the recycling pathway that targets NTRK1 to the plasma membrane. The protein is ADP-ribosylation factor-binding protein GGA3 of Homo sapiens (Human).